The following is a 208-amino-acid chain: Probable GTP-binding protein EngB (208 aa).

The 183-residue stretch at 23 to 205 (LTSEMVILGR…RQTLLKYLLT (183 aa)) folds into the EngB-type G domain. GTP is bound by residues 31-38 (GRSNVGKS), 57-61 (GKTRL), 84-87 (DLPG), 154-157 (TKFD), and 182-184 (FNA). Positions 38 and 59 each coordinate Mg(2+).

This sequence belongs to the TRAFAC class TrmE-Era-EngA-EngB-Septin-like GTPase superfamily. EngB GTPase family. It depends on Mg(2+) as a cofactor.

In terms of biological role, necessary for normal cell division and for the maintenance of normal septation. This chain is Probable GTP-binding protein EngB, found in Helicobacter pylori (strain J99 / ATCC 700824) (Campylobacter pylori J99).